Reading from the N-terminus, the 299-residue chain is S-formylglutathione hydrolase (299 aa).

Residues methionine 1 and histidine 140 each contribute to the Cu cation site. Active-site charge relay system residues include serine 161, aspartate 241, and histidine 276.

It belongs to the esterase D family. As to quaternary structure, monomer.

The protein resides in the cytoplasm. The enzyme catalyses S-formylglutathione + H2O = formate + glutathione + H(+). In terms of biological role, serine hydrolase involved in the detoxification of formaldehyde. The sequence is that of S-formylglutathione hydrolase from Saccharomyces cerevisiae (strain ATCC 204508 / S288c) (Baker's yeast).